The sequence spans 291 residues: Taste receptor type 2 member 16 (291 aa).

Residue M1 is a topological domain, extracellular. Residues 2 to 22 form a helical membrane-spanning segment; that stretch reads IPIQLTVFFMIIYVLESLTII. The Cytoplasmic portion of the chain corresponds to 23-41; that stretch reads VQSSLIVAVLGREWLQVRR. A helical transmembrane segment spans residues 42-62; the sequence is LMPVDMILISLGISRFCLQWA. The Extracellular portion of the chain corresponds to 63-84; it reads SMLNNFCSYLNLNYVLCNLTIT. An N-linked (GlcNAc...) asparagine glycan is attached at N80. Residues 85–105 form a helical membrane-spanning segment; sequence WEFFNILTFWLNSLLTVFYCI. The Cytoplasmic portion of the chain corresponds to 106–125; that stretch reads KVSSFTHHIFLWVRWRILRW. The helical transmembrane segment at 126–146 threads the bilayer; the sequence is FPWILLGSLTIACVTIIPSAI. At 147-182 the chain is on the extracellular side; that stretch reads GNYIQIQLLTMEHLPRNSTVTDRLEKFHQYQFQSHT. An N-linked (GlcNAc...) asparagine glycan is attached at N163. Residues 183-203 form a helical membrane-spanning segment; the sequence is VALVIPFILFLASTILLMASL. Topologically, residues 204–228 are cytoplasmic; that stretch reads TKQIQHHSTGHCNPSMKAHFTALRS. A helical transmembrane segment spans residues 229-249; the sequence is LAILFIVFTSYFLIILITIIG. The Extracellular portion of the chain corresponds to 250–257; sequence TLFDKRCW. The helical transmembrane segment at 258–278 threads the bilayer; sequence LWVWEAFVYAFILMHSTSLML. Residues 279–291 are Cytoplasmic-facing; it reads SSPTLKRILKGKC.

The protein belongs to the G-protein coupled receptor T2R family. As to quaternary structure, interacts with RTP3 and RTP4.

It is found in the cell membrane. In terms of biological role, receptor that may play a role in the perception of bitterness and is gustducin-linked. May function as a bitter taste receptor for the phytonutrient beta glucopyranosides, some of which are toxic and some of which lower the risk of cancer and cardiovascular disease. The activity of this receptor may stimulate alpha gustducin, mediate PLC-beta-2 activation and lead to the gating of TRPM5. In Pongo pygmaeus (Bornean orangutan), this protein is Taste receptor type 2 member 16 (TAS2R16).